Here is a 267-residue protein sequence, read N- to C-terminus: Tryptophan synthase alpha chain (267 aa).

Catalysis depends on proton acceptor residues E49 and D60.

It belongs to the TrpA family. Tetramer of two alpha and two beta chains.

The catalysed reaction is (1S,2R)-1-C-(indol-3-yl)glycerol 3-phosphate + L-serine = D-glyceraldehyde 3-phosphate + L-tryptophan + H2O. The protein operates within amino-acid biosynthesis; L-tryptophan biosynthesis; L-tryptophan from chorismate: step 5/5. Its function is as follows. The alpha subunit is responsible for the aldol cleavage of indoleglycerol phosphate to indole and glyceraldehyde 3-phosphate. The sequence is that of Tryptophan synthase alpha chain from Chloroflexus aggregans (strain MD-66 / DSM 9485).